The chain runs to 325 residues: GMP reductase (325 aa).

Cys-173 serves as the catalytic Thioimidate intermediate. NADP(+) is bound at residue Ile-202–Val-225.

This sequence belongs to the IMPDH/GMPR family. GuaC type 2 subfamily.

The enzyme catalyses IMP + NH4(+) + NADP(+) = GMP + NADPH + 2 H(+). Its function is as follows. Catalyzes the irreversible NADPH-dependent deamination of GMP to IMP. It functions in the conversion of nucleobase, nucleoside and nucleotide derivatives of G to A nucleotides, and in maintaining the intracellular balance of A and G nucleotides. In Leptothrix cholodnii (strain ATCC 51168 / LMG 8142 / SP-6) (Leptothrix discophora (strain SP-6)), this protein is GMP reductase.